Here is a 149-residue protein sequence, read N- to C-terminus: MRAVVQRVTSSSVQVDGNIVGSIGRGLNVLIGISKSDTLQDLKYIRDKVINLRIFEDEKDKMNLSILDVKGELLVISQFTLYGDCRKGRRPNFMEAKGGEEAEGLYKEFLSLLKESNIKIETGEFGADMKVEINNDGPVTIILDSSKNF.

The Gly-cisPro motif, important for rejection of L-amino acids signature appears at 137-138 (GP).

It belongs to the DTD family. As to quaternary structure, homodimer.

It localises to the cytoplasm. It catalyses the reaction glycyl-tRNA(Ala) + H2O = tRNA(Ala) + glycine + H(+). The enzyme catalyses a D-aminoacyl-tRNA + H2O = a tRNA + a D-alpha-amino acid + H(+). Functionally, an aminoacyl-tRNA editing enzyme that deacylates mischarged D-aminoacyl-tRNAs. Also deacylates mischarged glycyl-tRNA(Ala), protecting cells against glycine mischarging by AlaRS. Acts via tRNA-based rather than protein-based catalysis; rejects L-amino acids rather than detecting D-amino acids in the active site. By recycling D-aminoacyl-tRNA to D-amino acids and free tRNA molecules, this enzyme counteracts the toxicity associated with the formation of D-aminoacyl-tRNA entities in vivo and helps enforce protein L-homochirality. The polypeptide is D-aminoacyl-tRNA deacylase (Clostridium botulinum (strain Eklund 17B / Type B)).